The chain runs to 599 residues: Aspartate--tRNA(Asp/Asn) ligase (599 aa).

Glu-174 is a binding site for L-aspartate. An aspartate region spans residues 198–201 (QLFK). Arg-220 provides a ligand contact to L-aspartate. Residues 220 to 222 (RDE) and Gln-229 each bind ATP. Position 457 (His-457) interacts with L-aspartate. Glu-491 is a binding site for ATP. Arg-498 is an L-aspartate binding site. Residue 543–546 (GLDR) coordinates ATP.

It belongs to the class-II aminoacyl-tRNA synthetase family. Type 1 subfamily. In terms of assembly, homodimer.

It is found in the cytoplasm. It catalyses the reaction tRNA(Asx) + L-aspartate + ATP = L-aspartyl-tRNA(Asx) + AMP + diphosphate. Functionally, aspartyl-tRNA synthetase with relaxed tRNA specificity since it is able to aspartylate not only its cognate tRNA(Asp) but also tRNA(Asn). Reaction proceeds in two steps: L-aspartate is first activated by ATP to form Asp-AMP and then transferred to the acceptor end of tRNA(Asp/Asn). The sequence is that of Aspartate--tRNA(Asp/Asn) ligase from Paraburkholderia xenovorans (strain LB400).